The following is an 863-amino-acid chain: Eukaryotic translation initiation factor 3 subunit C (863 aa).

Positions 1–92 are disordered; sequence MSRFFRGGDD…VKSAKDKRFD (92 aa). Acidic residues predominate over residues 16–53; that stretch reads SSDEEELYSTSEEEEEEDQDQEESSEEEDEEESSDEDE. Residues 79-92 are compositionally biased toward basic and acidic residues; it reads GATKVKSAKDKRFD. The PCI domain maps to 604–778; it reads FHMHINLELL…KTVIFRKGVE (175 aa). The segment at 808–863 is disordered; sequence TQGSANAFSRKDGRQGGQRGGGQRSGRGGARAGGNAQRQAGGTQFTGGALGAAVRG. A compositionally biased stretch (gly residues) spans 822 to 839; that stretch reads QGGQRGGGQRSGRGGARA. The segment covering 840–850 has biased composition (low complexity); it reads GGNAQRQAGGT.

The protein belongs to the eIF-3 subunit C family. As to quaternary structure, component of the eukaryotic translation initiation factor 3 (eIF-3) complex.

The protein localises to the cytoplasm. Component of the eukaryotic translation initiation factor 3 (eIF-3) complex, which is involved in protein synthesis of a specialized repertoire of mRNAs and, together with other initiation factors, stimulates binding of mRNA and methionyl-tRNAi to the 40S ribosome. The eIF-3 complex specifically targets and initiates translation of a subset of mRNAs involved in cell proliferation. The protein is Eukaryotic translation initiation factor 3 subunit C of Chaetomium globosum (strain ATCC 6205 / CBS 148.51 / DSM 1962 / NBRC 6347 / NRRL 1970) (Soil fungus).